A 517-amino-acid polypeptide reads, in one-letter code: Probable G-protein coupled receptor Mth-like 4 (517 aa).

Residues M1–A18 form the signal peptide. Over E19 to K212 the chain is Extracellular. Cystine bridges form between C23-C77, C79-C84, C88-C183, C89-C100, and C145-C201. N-linked (GlcNAc...) asparagine glycosylation is present at N39. N117 and N165 each carry an N-linked (GlcNAc...) asparagine glycan. A helical transmembrane segment spans residues T213–V233. The Cytoplasmic segment spans residues E234–K242. A helical transmembrane segment spans residues C243–W263. Over K264–T272 the chain is Extracellular. A helical transmembrane segment spans residues A273–I293. The Cytoplasmic segment spans residues H294 to N319. The chain crosses the membrane as a helical span at residues L320–V340. The Extracellular segment spans residues K341–T363. Residues V364–V384 form a helical membrane-spanning segment. The Cytoplasmic segment spans residues L385–Q414. The chain crosses the membrane as a helical span at residues M415–L435. Residues S436–Q459 are Extracellular-facing. N-linked (GlcNAc...) asparagine glycosylation occurs at N456. The helical transmembrane segment at G460–G480 threads the bilayer. Over G481 to C517 the chain is Cytoplasmic.

Belongs to the G-protein coupled receptor 2 family. Mth subfamily.

The protein localises to the cell membrane. This Drosophila melanogaster (Fruit fly) protein is Probable G-protein coupled receptor Mth-like 4 (mthl4).